Reading from the N-terminus, the 332-residue chain is Fructose-1,6-bisphosphatase class 1 (332 aa).

Mg(2+)-binding residues include Glu89, Asp110, Leu112, and Asp113. Residues Asp113–Ser116, Asn206, Tyr239, Tyr257–Tyr259, and Lys269 contribute to the substrate site. Glu275 is a Mg(2+) binding site.

It belongs to the FBPase class 1 family. In terms of assembly, homotetramer. Mg(2+) is required as a cofactor.

Its subcellular location is the cytoplasm. It catalyses the reaction beta-D-fructose 1,6-bisphosphate + H2O = beta-D-fructose 6-phosphate + phosphate. Its pathway is carbohydrate biosynthesis; gluconeogenesis. The polypeptide is Fructose-1,6-bisphosphatase class 1 (Salmonella gallinarum (strain 287/91 / NCTC 13346)).